Here is a 238-residue protein sequence, read N- to C-terminus: Thymidine kinase a (238 aa).

ATP contacts are provided by residues G38 to S45, D70 to R72, and D115 to Q118. The Proton acceptor role is filled by E116. Y147 lines the substrate pocket. Zn(2+)-binding residues include C172 and C175. Substrate-binding positions include T191–G195 and Y200. Residue C204 participates in Zn(2+) binding.

It belongs to the thymidine kinase family. Monomer and dimer. Dimerization is stimulated by ATP. In terms of tissue distribution, expressed ubiquitously.

It is found in the cytoplasm. It carries out the reaction thymidine + ATP = dTMP + ADP + H(+). It functions in the pathway purine metabolism. The protein operates within pyrimidine metabolism. Part of the salvage pathway for purine and pyrimidine deoxyribonucleotide synthesis. Phosphorylates preferentially purines over pyrimidines. Mediates tolerance to genotoxins, such as ultraviolet-C (UV-C) irradiation, MMC, a DNA crosslinker, and ZEO, a DNA intercalator, that induce double-strand breaks and thus contributes to several DNA repair pathways by providing deoxythymidine triphosphate that serve as precursors for DNA repair and to balance deoxyribonucleotides pools. The sequence is that of Thymidine kinase a from Arabidopsis thaliana (Mouse-ear cress).